The primary structure comprises 207 residues: Ribosomal RNA small subunit methyltransferase G (207 aa).

Residues Gly-75, Met-80, 126-127, and Arg-141 each bind S-adenosyl-L-methionine; that span reads VE.

Belongs to the methyltransferase superfamily. RNA methyltransferase RsmG family.

The protein resides in the cytoplasm. The enzyme catalyses guanosine(527) in 16S rRNA + S-adenosyl-L-methionine = N(7)-methylguanosine(527) in 16S rRNA + S-adenosyl-L-homocysteine. Specifically methylates the N7 position of guanine in position 527 of 16S rRNA. The sequence is that of Ribosomal RNA small subunit methyltransferase G from Laribacter hongkongensis (strain HLHK9).